We begin with the raw amino-acid sequence, 155 residues long: Ribosomal RNA large subunit methyltransferase H (155 aa).

Residues L73, G104, and 123–128 (LSPLTL) contribute to the S-adenosyl-L-methionine site.

This sequence belongs to the RNA methyltransferase RlmH family. Homodimer.

The protein resides in the cytoplasm. It catalyses the reaction pseudouridine(1915) in 23S rRNA + S-adenosyl-L-methionine = N(3)-methylpseudouridine(1915) in 23S rRNA + S-adenosyl-L-homocysteine + H(+). In terms of biological role, specifically methylates the pseudouridine at position 1915 (m3Psi1915) in 23S rRNA. In Ectopseudomonas mendocina (strain ymp) (Pseudomonas mendocina), this protein is Ribosomal RNA large subunit methyltransferase H.